The primary structure comprises 475 residues: Ribulose bisphosphate carboxylase large chain (475 aa).

Positions 123 and 173 each coordinate substrate. Lysine 175 serves as the catalytic Proton acceptor. Lysine 177 provides a ligand contact to substrate. Lysine 201, aspartate 203, and glutamate 204 together coordinate Mg(2+). Lysine 201 carries the N6-carboxylysine modification. Histidine 294 acts as the Proton acceptor in catalysis. 3 residues coordinate substrate: arginine 295, histidine 327, and serine 379.

This sequence belongs to the RuBisCO large chain family. Type I subfamily. Heterohexadecamer of 8 large chains and 8 small chains. It depends on Mg(2+) as a cofactor.

Its subcellular location is the plastid. It is found in the cyanelle. The catalysed reaction is 2 (2R)-3-phosphoglycerate + 2 H(+) = D-ribulose 1,5-bisphosphate + CO2 + H2O. The enzyme catalyses D-ribulose 1,5-bisphosphate + O2 = 2-phosphoglycolate + (2R)-3-phosphoglycerate + 2 H(+). Functionally, ruBisCO catalyzes two reactions: the carboxylation of D-ribulose 1,5-bisphosphate, the primary event in carbon dioxide fixation, as well as the oxidative fragmentation of the pentose substrate in the photorespiration process. Both reactions occur simultaneously and in competition at the same active site. The polypeptide is Ribulose bisphosphate carboxylase large chain (Cyanophora paradoxa).